The chain runs to 432 residues: Ornithine decarboxylase (432 aa).

Lysine 98 carries the post-translational modification N6-(pyridoxal phosphate)lysine. Pyridoxal 5'-phosphate contacts are provided by residues serine 229, glycine 266, and 296–299; that span reads EPGR. 341–342 is a substrate binding site; it reads FD. Cysteine 377 serves as the catalytic Proton donor; shared with dimeric partner. Aspartate 378 lines the substrate pocket. A pyridoxal 5'-phosphate-binding site is contributed by tyrosine 407.

This sequence belongs to the Orn/Lys/Arg decarboxylase class-II family. Homodimer. Only the dimer is catalytically active, as the active sites are constructed of residues from both monomers. The cofactor is pyridoxal 5'-phosphate.

Its subcellular location is the cytoplasm. It catalyses the reaction L-ornithine + H(+) = putrescine + CO2. Its pathway is amine and polyamine biosynthesis; putrescine biosynthesis via L-ornithine pathway; putrescine from L-ornithine: step 1/1. Its activity is regulated as follows. Inhibited by antizyme (AZ) OAZ1 in response to polyamine levels. AZ inhibits the assembly of the functional homodimer by binding to ODC monomers and targeting them for ubiquitin-independent proteolytic destruction by the 26S proteasome. Functionally, catalyzes the first and rate-limiting step of polyamine biosynthesis that converts ornithine into putrescine, which is the precursor for the polyamines, spermidine and spermine. Polyamines are essential for cell proliferation and are implicated in cellular processes, ranging from DNA replication to apoptosis. The chain is Ornithine decarboxylase (spe1) from Schizosaccharomyces pombe (strain 972 / ATCC 24843) (Fission yeast).